A 1384-amino-acid polypeptide reads, in one-letter code: MSIQPSEVAASSARTDTREALGIEESAFDCVSITVASPETIRKWSKGEVKNPETINYRTFKPEPGGLFCQKIFGPVRDYECACGKYKRIKYKDVVCDRCGVEVTIARVRRERMGHIELAVPVAHIWFLKSMPSRLGLLLDMTARSLERVIYYENYMVIDPGKTPLEPHQLLTDTEYRQAIDEYGEDSFVAKMGAEAVRDALVKTDLEATVAELQEQMRATKSKQIKKKLSKRLKVIQGFIHSKSRPEWMVLEVLPVIPPDLRPLVPLEGGRFATSDLNDLYRRVINRNNRLRNLMQLKTPDVIIHNEKRMLQEAVDALFDNGRHGRPVTGAGNRPLKSLSDMLKGKQGRFRQNLLGKRVDYSGRSVIVIGPELKLHQCGLPKKMALVLFEPFIIRRLKELGFVHTVRGARKMIEKKSPEVWDILEEVTKGHPVLLNRAPTLHRLSIQAFEPVLIEGEAIRVHPLVCTAYNADFDGDQMAVHVPLSLEAIMECKLLMMATSNIFSPSSGKPILTPSQDIVLGAYYLTVEPRKKPAKDERVPLLSGLQEVLYAVADGAMKKHDWVEVPNPDHGRETIFGNKEKKVLRTTVGRVIFNQIWPAGLGFVNFPVPKSKLGDLILNTHKLTGNQATVETLDRLKELGFTTAMQAGISIGIDDMIIPEAKKDIVAETRKKIAEVEAQFNKGIITEGERKNKVIDLWTGTTDRIAKEVFAKLESNEGRNEVNPVYIMMDSGARGNKQQVRQLCGTRGLMAKPSGEIIERPILSSFREGLTVLEYFISTHGARKGLADTALKTADAGYLTRKLCDVAMDVIIAEDDCGSRDGVWKKAIFEGDDEIVSLRERIVGRFSSDDVFNPINPSEILVGSGELITEEIATRVDELGIERVKVMSPLTSTAQHGIDGKSYGINPATGKVAKVGDSVGIIAAQSIGEPGTQLTMRTFHIGGVASGGFKTPEIKVRASGTVRYRGLRLVETADGGSIVLNKTGTIQIVDAEEKELETYNIVVGSFLHVGDGEQIQKGAILAQWDPYNIPVLSEKGGTLAFKDMIPGVTVKRELDESSGRIATVVIEHKEDLNPQIEIRDPKGKPLAAYSIPVGAQIAVNEGDIIQPGALLAKTPRQASKTKDITGGLPRVAELFEARRPKDAAEMSRIDGIVSFEGTVRGKRKLVVKNDDTAQEEEHLIATGKHIIVQPGDVVHKGQHLTEGAADPHEILEILGPSALYDFLISQVQEVYRLQGVAINDKHIEIIIRQMLRKVRITDPGDTENFWGEQVDRAQFLAENRRIEEAGGKPAEAEPILLGITKASLETESFISAASFQETTRVLTDASTLGKVDMLKGFKENVIMGHLIPAGTGLPKYKNLKITLPFGADLPVEPEQPAPAATETA.

Residues C81, C83, C96, and C99 each contribute to the Zn(2+) site. Positions 472, 474, and 476 each coordinate Mg(2+).

Belongs to the RNA polymerase beta' chain family. The RNAP catalytic core consists of 2 alpha, 1 beta, 1 beta' and 1 omega subunit. When a sigma factor is associated with the core the holoenzyme is formed, which can initiate transcription. Mg(2+) is required as a cofactor. Zn(2+) serves as cofactor.

It catalyses the reaction RNA(n) + a ribonucleoside 5'-triphosphate = RNA(n+1) + diphosphate. In terms of biological role, DNA-dependent RNA polymerase catalyzes the transcription of DNA into RNA using the four ribonucleoside triphosphates as substrates. This is DNA-directed RNA polymerase subunit beta' from Opitutus terrae (strain DSM 11246 / JCM 15787 / PB90-1).